A 38-amino-acid chain; its full sequence is Photosystem II reaction center protein L (38 aa).

Residues 17–37 traverse the membrane as a helical segment; that stretch reads GLYWGLLLIFVLAVLFSSYFF.

The protein belongs to the PsbL family. As to quaternary structure, PSII is composed of 1 copy each of membrane proteins PsbA, PsbB, PsbC, PsbD, PsbE, PsbF, PsbH, PsbI, PsbJ, PsbK, PsbL, PsbM, PsbT, PsbX, PsbY, PsbZ, Psb30/Ycf12, at least 3 peripheral proteins of the oxygen-evolving complex and a large number of cofactors. It forms dimeric complexes.

It is found in the plastid. The protein resides in the chloroplast thylakoid membrane. Its function is as follows. One of the components of the core complex of photosystem II (PSII). PSII is a light-driven water:plastoquinone oxidoreductase that uses light energy to abstract electrons from H(2)O, generating O(2) and a proton gradient subsequently used for ATP formation. It consists of a core antenna complex that captures photons, and an electron transfer chain that converts photonic excitation into a charge separation. This subunit is found at the monomer-monomer interface and is required for correct PSII assembly and/or dimerization. This is Photosystem II reaction center protein L from Staurastrum punctulatum (Green alga).